A 253-amino-acid polypeptide reads, in one-letter code: Triosephosphate isomerase (253 aa).

Substrate is bound at residue 9-11; the sequence is NWK. The Electrophile role is filled by H97. E169 serves as the catalytic Proton acceptor. Residues G175, S215, and 236 to 237 each bind substrate; that span reads GG.

It belongs to the triosephosphate isomerase family. In terms of assembly, homodimer.

The protein localises to the cytoplasm. The catalysed reaction is D-glyceraldehyde 3-phosphate = dihydroxyacetone phosphate. The protein operates within carbohydrate biosynthesis; gluconeogenesis. It functions in the pathway carbohydrate degradation; glycolysis; D-glyceraldehyde 3-phosphate from glycerone phosphate: step 1/1. Functionally, involved in the gluconeogenesis. Catalyzes stereospecifically the conversion of dihydroxyacetone phosphate (DHAP) to D-glyceraldehyde-3-phosphate (G3P). This is Triosephosphate isomerase from Staphylococcus aureus (strain NCTC 8325 / PS 47).